A 327-amino-acid polypeptide reads, in one-letter code: ATP-dependent 6-phosphofructokinase (327 aa).

An ATP-binding site is contributed by Gly-12. ADP contacts are provided by residues 22–26 (RGVVR) and 55–60 (RYSVSD). ATP is bound by residues 73-74 (RF) and 103-106 (GDGS). Asp-104 provides a ligand contact to Mg(2+). Position 127–129 (127–129 (TID)) interacts with substrate. Asp-129 acts as the Proton acceptor in catalysis. Arg-156 contributes to the ADP binding site. Substrate contacts are provided by residues Arg-164 and 171–173 (MGR). ADP-binding positions include 187 to 189 (GCE), Lys-213, and 215 to 217 (KKH). Substrate contacts are provided by residues Glu-224, Arg-245, and 251-254 (HIQR).

Belongs to the phosphofructokinase type A (PFKA) family. ATP-dependent PFK group I subfamily. Prokaryotic clade 'B1' sub-subfamily. In terms of assembly, homotetramer. Mg(2+) is required as a cofactor.

The protein localises to the cytoplasm. The enzyme catalyses beta-D-fructose 6-phosphate + ATP = beta-D-fructose 1,6-bisphosphate + ADP + H(+). It functions in the pathway carbohydrate degradation; glycolysis; D-glyceraldehyde 3-phosphate and glycerone phosphate from D-glucose: step 3/4. With respect to regulation, allosterically activated by ADP and other diphosphonucleosides, and allosterically inhibited by phosphoenolpyruvate. Catalyzes the phosphorylation of D-fructose 6-phosphate to fructose 1,6-bisphosphate by ATP, the first committing step of glycolysis. The sequence is that of ATP-dependent 6-phosphofructokinase from Yersinia pseudotuberculosis serotype IB (strain PB1/+).